A 459-amino-acid chain; its full sequence is Elongation factor 1-alpha (459 aa).

Residue G2 is modified to N,N,N-trimethylglycine. At K3 the chain carries N6,N6-dimethyllysine; alternate. N6-methyllysine; alternate is present on K3. Positions 5–239 (KSHINVVVIG…DAIDPPSRPT (235 aa)) constitute a tr-type G domain. The G1 stretch occupies residues 14–21 (GHVDSGKS). 14 to 21 (GHVDSGKS) contributes to the GTP binding site. Residue K30 is modified to N6-methyllysine. A G2 region spans residues 70 to 74 (GITID). K79 carries the post-translational modification N6,N6,N6-trimethyllysine. Residues 91 to 94 (DAPG) are G3. GTP-binding positions include 91 to 95 (DAPGH) and 153 to 156 (NKMD). The segment at 153–156 (NKMD) is G4. The G5 stretch occupies residues 192-194 (SGF). K315 carries the N6,N6-dimethyllysine; alternate modification. K315 is subject to N6-methyllysine; alternate. At K389 the chain carries N6-methyllysine.

Belongs to the TRAFAC class translation factor GTPase superfamily. Classic translation factor GTPase family. EF-Tu/EF-1A subfamily.

The protein resides in the cytoplasm. Functionally, this protein promotes the GTP-dependent binding of aminoacyl-tRNA to the A-site of ribosomes during protein biosynthesis. This Aureobasidium pullulans (Black yeast) protein is Elongation factor 1-alpha (TEF1).